We begin with the raw amino-acid sequence, 552 residues long: Hydroxylamine reductase (552 aa).

Residues cysteine 5, cysteine 8, cysteine 20, and cysteine 27 each contribute to the [2Fe-2S] cluster site. The hybrid [4Fe-2O-2S] cluster site is built by histidine 251, glutamate 275, cysteine 319, cysteine 407, cysteine 435, cysteine 460, glutamate 494, and lysine 496. Position 407 is a cysteine persulfide (cysteine 407).

The protein belongs to the HCP family. [2Fe-2S] cluster is required as a cofactor. The cofactor is hybrid [4Fe-2O-2S] cluster.

Its subcellular location is the cytoplasm. The enzyme catalyses A + NH4(+) + H2O = hydroxylamine + AH2 + H(+). Catalyzes the reduction of hydroxylamine to form NH(3) and H(2)O. This is Hydroxylamine reductase from Shigella flexneri.